The sequence spans 356 residues: SERTA domain-containing protein 4 (356 aa).

The segment at Ser33–Ala53 is disordered. Residues Ile101 to Asn147 enclose the SERTA domain. Positions Thr215–Ser232 are enriched in low complexity. Disordered stretches follow at residues Thr215 to Pro238, Lys280 to Val302, and Trp332 to Ile356. The segment covering Lys280–Arg292 has biased composition (basic and acidic residues).

The protein is SERTA domain-containing protein 4 (SERTAD4) of Homo sapiens (Human).